The sequence spans 379 residues: Cobalt-precorrin-5B C(1)-methyltransferase (379 aa).

It belongs to the CbiD family.

It catalyses the reaction Co-precorrin-5B + S-adenosyl-L-methionine = Co-precorrin-6A + S-adenosyl-L-homocysteine. It functions in the pathway cofactor biosynthesis; adenosylcobalamin biosynthesis; cob(II)yrinate a,c-diamide from sirohydrochlorin (anaerobic route): step 6/10. Functionally, catalyzes the methylation of C-1 in cobalt-precorrin-5B to form cobalt-precorrin-6A. The sequence is that of Cobalt-precorrin-5B C(1)-methyltransferase from Salmonella dublin (strain CT_02021853).